Here is an 87-residue protein sequence, read N- to C-terminus: MVQPTPYININIFMLKINSFENASAVNVGQNLLAEWQNSDKKNQGYGQNFGDASGFMGTRSHVDDRDQIDSPASFESEAVNSSIKRK.

Positions 43–87 (NQGYGQNFGDASGFMGTRSHVDDRDQIDSPASFESEAVNSSIKRK) are disordered.

This is an uncharacterized protein from Bacillus subtilis (strain 168).